Reading from the N-terminus, the 442-residue chain is UDP-glucosyltransferase 29 (442 aa).

The Proton acceptor role is filled by His-20. His-20 lines the an anthocyanidin pocket. Residue Asp-116 is the Charge relay of the active site. Positions 138, 318, 320, 335, 338, 340, 343, 359, and 360 each coordinate UDP-alpha-D-glucose.

It belongs to the UDP-glycosyltransferase family. Expressed at higher levels in roots than in leaves.

The catalysed reaction is (20S)-ginsenoside F2 + UDP-alpha-D-glucose = (20S)-ginsenoside Rd + UDP + H(+). The enzyme catalyses (20S)-ginsenoside Rh2 + UDP-alpha-D-glucose = (20S)-ginsenoside Rg3 + UDP + H(+). Its pathway is secondary metabolite biosynthesis; terpenoid biosynthesis. Its function is as follows. Component of the dammarane-type triterpene saponins (e.g. PPD-type ginsenosides or panaxosides) biosynthetic pathway. Glycosyltransferase that catalyzes the conversion of ginsenoside Rh2 to ginsenoside Rg3. Triggers the biosynthesis of ginsenoside Rd from ginsenoside F2. The protein is UDP-glucosyltransferase 29 of Panax ginseng (Korean ginseng).